The following is a 501-amino-acid chain: Probable malate:quinone oxidoreductase (501 aa).

The protein belongs to the MQO family. The cofactor is FAD.

The catalysed reaction is (S)-malate + a quinone = a quinol + oxaloacetate. It functions in the pathway carbohydrate metabolism; tricarboxylic acid cycle; oxaloacetate from (S)-malate (quinone route): step 1/1. The sequence is that of Probable malate:quinone oxidoreductase from Paenarthrobacter aurescens (strain TC1).